An 85-amino-acid polypeptide reads, in one-letter code: Sec-independent protein translocase protein TatA (85 aa).

A helical membrane pass occupies residues 1 to 21 (MGSFSIWHWLIVLLIIMMVFG). Over residues 39 to 51 (FKEGMREGSEDKP) the composition is skewed to basic and acidic residues. The disordered stretch occupies residues 39-85 (FKEGMREGSEDKPAGSQQGQQAAGQPPRELHDSTTIDVEARDKSKQG). The span at 52-65 (AGSQQGQQAAGQPP) shows a compositional bias: low complexity. Residues 66 to 85 (RELHDSTTIDVEARDKSKQG) are compositionally biased toward basic and acidic residues.

This sequence belongs to the TatA/E family. As to quaternary structure, the Tat system comprises two distinct complexes: a TatABC complex, containing multiple copies of TatA, TatB and TatC subunits, and a separate TatA complex, containing only TatA subunits. Substrates initially bind to the TatABC complex, which probably triggers association of the separate TatA complex to form the active translocon.

It is found in the cell inner membrane. Part of the twin-arginine translocation (Tat) system that transports large folded proteins containing a characteristic twin-arginine motif in their signal peptide across membranes. TatA could form the protein-conducting channel of the Tat system. The sequence is that of Sec-independent protein translocase protein TatA from Ralstonia nicotianae (strain ATCC BAA-1114 / GMI1000) (Ralstonia solanacearum).